A 293-amino-acid polypeptide reads, in one-letter code: Ribonuclease Z (293 aa).

7 residues coordinate Zn(2+): His-60, His-62, Asp-64, His-65, His-132, Asp-200, and His-256. The active-site Proton acceptor is the Asp-64.

The protein belongs to the RNase Z family. As to quaternary structure, homodimer. It depends on Zn(2+) as a cofactor.

The enzyme catalyses Endonucleolytic cleavage of RNA, removing extra 3' nucleotides from tRNA precursor, generating 3' termini of tRNAs. A 3'-hydroxy group is left at the tRNA terminus and a 5'-phosphoryl group is left at the trailer molecule.. Zinc phosphodiesterase, which displays some tRNA 3'-processing endonuclease activity. Probably involved in tRNA maturation, by removing a 3'-trailer from precursor tRNA. This is Ribonuclease Z from Sulfurisphaera tokodaii (strain DSM 16993 / JCM 10545 / NBRC 100140 / 7) (Sulfolobus tokodaii).